The following is a 104-amino-acid chain: Putative zinc finger protein ORF104b (104 aa).

The C2H2-type zinc finger occupies 62-85 (YECKYCHTRYLSHTGIVYHLEREH).

This Acidianus sp. F28 (AFV-2) protein is Putative zinc finger protein ORF104b.